Consider the following 676-residue polypeptide: Zinc finger CCCH domain-containing protein 38 (676 aa).

5 disordered regions span residues Met1–Phe134, Ser172–Asn217, Arg245–Asp307, Ser487–Gln506, and Ile533–Gly594. A compositionally biased stretch (basic and acidic residues) spans Ser12–His21. Residues Arg58 to Val79 are compositionally biased toward polar residues. 3 stretches are compositionally biased toward basic and acidic residues: residues Ala101–Arg110, Glu124–Phe134, and Ser192–Phe212. A C3H1-type zinc finger spans residues Arg214 to Ala243. Low complexity predominate over residues Asn251 to Asn262. Residues Lys269–Asn278 are compositionally biased toward basic and acidic residues. Positions Leu538–Glu562 are enriched in basic and acidic residues. Residues Asp563–Asp583 are compositionally biased toward acidic residues. The segment covering Glu584–Gly594 has biased composition (basic and acidic residues).

The chain is Zinc finger CCCH domain-containing protein 38 from Arabidopsis thaliana (Mouse-ear cress).